Reading from the N-terminus, the 489-residue chain is Phosphoglucosamine mutase (489 aa).

The active-site Phosphoserine intermediate is Ser-136. 4 residues coordinate Mg(2+): Ser-136, Asp-275, Asp-277, and Asp-279. At Ser-136 the chain carries Phosphoserine.

It belongs to the phosphohexose mutase family. Mg(2+) is required as a cofactor. In terms of processing, activated by phosphorylation.

The catalysed reaction is alpha-D-glucosamine 1-phosphate = D-glucosamine 6-phosphate. Its function is as follows. Catalyzes the conversion of glucosamine-6-phosphate to glucosamine-1-phosphate. The chain is Phosphoglucosamine mutase from Trichodesmium erythraeum (strain IMS101).